Reading from the N-terminus, the 720-residue chain is Polyribonucleotide nucleotidyltransferase (720 aa).

Mg(2+)-binding residues include Asp-486 and Asp-492. The KH domain maps to 553–612; the sequence is PRITVINVPKEKIREVIGTGGKVIREIVEFSGAKIDIEDDGTIKIASTSEESTQKAIDRI. The region spanning 622–690 is the S1 motif domain; that stretch reads GKIYNGKVVK…DRGKVKLSMR (69 aa). The disordered stretch occupies residues 698-720; the sequence is EDISDKVGPKGGRGGRGEGDLAE.

It belongs to the polyribonucleotide nucleotidyltransferase family. Mg(2+) is required as a cofactor.

The protein resides in the cytoplasm. It carries out the reaction RNA(n+1) + phosphate = RNA(n) + a ribonucleoside 5'-diphosphate. Functionally, involved in mRNA degradation. Catalyzes the phosphorolysis of single-stranded polyribonucleotides processively in the 3'- to 5'-direction. This chain is Polyribonucleotide nucleotidyltransferase, found in Granulibacter bethesdensis (strain ATCC BAA-1260 / CGDNIH1).